We begin with the raw amino-acid sequence, 568 residues long: MSLRLPQNPNAGLFKQGYNSYSNADGQIIKSIAAIRELHQMCLTSMGPCGRNKIIVNHLGKIIITNDAATMLRELDIVHPAVKVLVMATEQQKIDMGDGTNLVMILAGELLNVSEKLISMGLSAVEIIQGYNMARKFTLKELDEMVVGEITDKNDKNELLKMIKPVISSKKYGSEDILSELVSEAVSHVLPVAQQAGEIPYFNVDSIRVVKIMGGSLSNSTVIKGMVFNREPEGHVKSLSEDKKHKVAVFTCPLDIANTETKGTVLLHNAQEMLDFSKGEEKQIDAMMKEIADMGVECIVAGAGVGELALHYLNRYGILVLKVPSKFELRRLCRVCGATPLPRLGAPTPEELGLVETVKTMEIGGDRVTVFKQEQGEISRTSTIILRGATQNNLDDIERAIDDGVAAVKGLMKPSGGKLLPGAGATEIELISRITKYGERTPGLLQLAIKQFAVAFEVVPRTLAETAGLDVNEVLPNLYAAHNVTEPGAVKTDHLYKGVDIDGESDEGVKDIREENIYDMLATKKFAINVATEAATTVLSIDQIIMAKKAGGPRAPQGPRPGNWDQED.

Lys15 is covalently cross-linked (Glycyl lysine isopeptide (Lys-Gly) (interchain with G-Cter in ubiquitin)). Ser505 bears the Phosphoserine mark.

This sequence belongs to the TCP-1 chaperonin family. In terms of assembly, heterooligomeric complex of about 850 to 900 kDa that forms two stacked rings, 12 to 16 nm in diameter.

The protein resides in the cytoplasm. Functionally, molecular chaperone; assists the folding of proteins upon ATP hydrolysis. Known to play a role, in vitro, in the folding of actin and tubulin. In yeast may play a role in mitotic spindle formation. The polypeptide is T-complex protein 1 subunit theta (CCT8) (Saccharomyces cerevisiae (strain ATCC 204508 / S288c) (Baker's yeast)).